The following is a 201-amino-acid chain: Small ribosomal subunit protein uS5 (201 aa).

A disordered region spans residues 1-28; it reads MAGPQRRGSGAGGGERRDRKGRDGGAGA. Residues 14 to 23 are compositionally biased toward basic and acidic residues; it reads GERRDRKGRD. An S5 DRBM domain is found at 34-97; sequence YVERVVAINR…EEAKKHFFKV (64 aa).

It belongs to the universal ribosomal protein uS5 family. In terms of assembly, part of the 30S ribosomal subunit. Contacts proteins S4 and S8.

Functionally, with S4 and S12 plays an important role in translational accuracy. In terms of biological role, located at the back of the 30S subunit body where it stabilizes the conformation of the head with respect to the body. In Streptomyces coelicolor (strain ATCC BAA-471 / A3(2) / M145), this protein is Small ribosomal subunit protein uS5.